The chain runs to 160 residues: Small ribosomal subunit protein uS7B (160 aa).

The protein belongs to the universal ribosomal protein uS7 family. As to quaternary structure, part of the 30S ribosomal subunit. Contacts proteins S9 and S11.

One of the primary rRNA binding proteins, it binds directly to 16S rRNA where it nucleates assembly of the head domain of the 30S subunit. Is located at the subunit interface close to the decoding center, probably blocks exit of the E-site tRNA. In Aquifex aeolicus (strain VF5), this protein is Small ribosomal subunit protein uS7B.